Here is a 252-residue protein sequence, read N- to C-terminus: uncharacterized protein (252 aa).

Residues Ile106–Gln140 are a coiled coil.

This is an uncharacterized protein from Caenorhabditis elegans.